The primary structure comprises 312 residues: uncharacterized protein (312 aa).

The first 28 residues, 1–28, serve as a signal peptide directing secretion; it reads MNSADTQEPKSFNHTDMWTAFGTTMSGA.

Its function is as follows. The FAS-operon encodes genes involved in cytokinin production and in host plant fasciation (leafy gall). This is an uncharacterized protein from Rhodococcoides fascians (Rhodococcus fascians).